The following is a 159-amino-acid chain: Transcription elongation factor GreA (159 aa).

Positions Ser-44 to Ile-75 form a coiled coil.

This sequence belongs to the GreA/GreB family.

Functionally, necessary for efficient RNA polymerase transcription elongation past template-encoded arresting sites. The arresting sites in DNA have the property of trapping a certain fraction of elongating RNA polymerases that pass through, resulting in locked ternary complexes. Cleavage of the nascent transcript by cleavage factors such as GreA or GreB allows the resumption of elongation from the new 3'terminus. GreA releases sequences of 2 to 3 nucleotides. This Chlorobium phaeovibrioides (strain DSM 265 / 1930) (Prosthecochloris vibrioformis (strain DSM 265)) protein is Transcription elongation factor GreA.